Here is a 497-residue protein sequence, read N- to C-terminus: Probable cytosol aminopeptidase (497 aa).

Residues lysine 267 and aspartate 272 each contribute to the Mn(2+) site. The active site involves lysine 279. Mn(2+)-binding residues include aspartate 290, aspartate 349, and glutamate 351. Residue arginine 353 is part of the active site.

It belongs to the peptidase M17 family. The cofactor is Mn(2+).

It is found in the cytoplasm. It catalyses the reaction Release of an N-terminal amino acid, Xaa-|-Yaa-, in which Xaa is preferably Leu, but may be other amino acids including Pro although not Arg or Lys, and Yaa may be Pro. Amino acid amides and methyl esters are also readily hydrolyzed, but rates on arylamides are exceedingly low.. The enzyme catalyses Release of an N-terminal amino acid, preferentially leucine, but not glutamic or aspartic acids.. In terms of biological role, presumably involved in the processing and regular turnover of intracellular proteins. Catalyzes the removal of unsubstituted N-terminal amino acids from various peptides. This Nitrosomonas europaea (strain ATCC 19718 / CIP 103999 / KCTC 2705 / NBRC 14298) protein is Probable cytosol aminopeptidase.